A 470-amino-acid polypeptide reads, in one-letter code: MTELPDNTRWQLWIVAFGFFMQSLDTTIVNTALPSMAKSLGESPLHMHMVVVSYVLTVAVMLPASGWLADKIGVRNIFFAAIVLFTLGSLFCALSGTLNQLVLARVLQGVGGAMMVPVGRLTVMKIVPRAQYMAAMTFVTLPGQIGPLLGPALGGVLVEYASWHWIFLINIPVGIVGAMATFMLMPNYTIETRRFDLPGFLLLAIGMAVLTLALDGSKSMGISPWTLAGLAAGGAAAILLYLFHAKKSSGALFSLRLFRTPTFSLGLLGSFAGRIGSGMLPFMTPVFLQIGLGFSPFHAGLMMIPMVLGSMGMKRIVVQIVNRFGYRRVLVATTLGLALVSLLFMSVALLGWYYLLPLVLLLQGMVNSARFSSMNTLTLKDLPDTLASSGNSLLSMIMQLSMSIGVTIAGMLLGMFGQQHIGIDSSATHHVFMYTWLCMAVIIALPAIIFARVPNDTQQNMVISRRKRSL.

Topologically, residues 1–11 (MTELPDNTRWQ) are periplasmic. A helical transmembrane segment spans residues 12 to 32 (LWIVAFGFFMQSLDTTIVNTA). Topologically, residues 33–48 (LPSMAKSLGESPLHMH) are cytoplasmic. A helical transmembrane segment spans residues 49–69 (MVVVSYVLTVAVMLPASGWLA). Residues 70–76 (DKIGVRN) are Periplasmic-facing. The chain crosses the membrane as a helical span at residues 77 to 97 (IFFAAIVLFTLGSLFCALSGT). Residues 98–101 (LNQL) lie on the Cytoplasmic side of the membrane. A helical transmembrane segment spans residues 102-124 (VLARVLQGVGGAMMVPVGRLTVM). The Periplasmic portion of the chain corresponds to 125 to 137 (KIVPRAQYMAAMT). Residues 138–158 (FVTLPGQIGPLLGPALGGVLV) traverse the membrane as a helical segment. Over 159-164 (EYASWH) the chain is Cytoplasmic. The helical transmembrane segment at 165–185 (WIFLINIPVGIVGAMATFMLM) threads the bilayer. Topologically, residues 186-196 (PNYTIETRRFD) are periplasmic. The chain crosses the membrane as a helical span at residues 197–217 (LPGFLLLAIGMAVLTLALDGS). Over 218–224 (KSMGISP) the chain is Cytoplasmic. Residues 225–245 (WTLAGLAAGGAAAILLYLFHA) traverse the membrane as a helical segment. Over 246 to 262 (KKSSGALFSLRLFRTPT) the chain is Periplasmic. A helical membrane pass occupies residues 263–283 (FSLGLLGSFAGRIGSGMLPFM). At 284–285 (TP) the chain is on the cytoplasmic side. The chain crosses the membrane as a helical span at residues 286–306 (VFLQIGLGFSPFHAGLMMIPM). Over 307 to 341 (VLGSMGMKRIVVQIVNRFGYRRVLVATTLGLALVS) the chain is Periplasmic. A helical membrane pass occupies residues 342–362 (LLFMSVALLGWYYLLPLVLLL). The Cytoplasmic portion of the chain corresponds to 363–395 (QGMVNSARFSSMNTLTLKDLPDTLASSGNSLLS). The helical transmembrane segment at 396–416 (MIMQLSMSIGVTIAGMLLGMF) threads the bilayer. The Periplasmic portion of the chain corresponds to 417-430 (GQQHIGIDSSATHH). The helical transmembrane segment at 431 to 451 (VFMYTWLCMAVIIALPAIIFA) threads the bilayer. Over 452-470 (RVPNDTQQNMVISRRKRSL) the chain is Cytoplasmic.

Belongs to the major facilitator superfamily. TCR/Tet family.

It localises to the cell inner membrane. This chain is Putative multidrug resistance protein MdtD, found in Salmonella paratyphi A (strain ATCC 9150 / SARB42).